Reading from the N-terminus, the 577-residue chain is MSHQPLSCLTEKEDSPSESTGNGPPHLAHPNLDTFTPEELLQQMKELLTENHQLKEAMKLNNQAMKGRFEELSAWTEKQKEERQFFEIQSKEAKERLMALSHENEKLKEELGKLKGKSERSSEDPTDDSRLPRAEAEQEKDQLRTQVVRLQAEKADLLGIVSELQLKLNSSGSSEDSFVEIRMAEGEAEGSVKEIKHSPGPTRTVSTGTALSKYRSRSADGAKNYFEHEELTVSQLLLCLREGNQKVERLEVALKEAKERVSDFEKKTSNRSEIETQTEGSTEKENDEEKGPETVGSEVEALNLQVTSLFKELQEAHTKLSEAELMKKRLQEKCQALERKNSAIPSELNEKQELVYTNKKLELQVESMLSEIKMEQAKTEDEKSKLTVLQMTHNKLLQEHNNALKTIEELTRKESEKVDRAVLKELSEKLELAEKALASKQLQMDEMKQTIAKQEEDLETMTILRAQMEVYCSDFHAERAAREKIHEEKEQLALQLAVLLKENDAFEDGGRQSLMEMQSRHGARTSDSDQQAYLVQRGAEDRDWRQQRNIPIHSCPKCGEVLPDIDTLQIHVMDCII.

Disordered stretches follow at residues 1-32 (MSHQ…HPNL) and 101-143 (SHEN…KDQL). A coiled-coil region spans residues 38 to 170 (EELLQQMKEL…VSELQLKLNS (133 aa)). The segment at 58–209 (MKLNNQAMKG…GPTRTVSTGT (152 aa)) is interaction with Rab8. Positions 176–181 (DSFVEI) match the LIR motif. Ser177 is modified (phosphoserine; by TBK1). The segment covering 186–197 (GEAEGSVKEIKH) has biased composition (basic and acidic residues). Disordered regions lie at residues 186–209 (GEAE…STGT) and 261–297 (VSDF…TVGS). Residue Ser198 is modified to Phosphoserine. A coiled-coil region spans residues 239–508 (CLREGNQKVE…LLKENDAFED (270 aa)). 2 stretches are compositionally biased toward basic and acidic residues: residues 261 to 274 (VSDF…RSEI) and 281 to 292 (STEKENDEEKGP). Ser342 carries the post-translational modification Phosphoserine. Positions 411–577 (TRKESEKVDR…LQIHVMDCII (167 aa)) are interaction with HD. The interaction with MYO6 stretch occupies residues 412-520 (RKESEKVDRA…RQSLMEMQSR (109 aa)). Positions 474–479 (DFHAER) match the UBAN motif. A Phosphoserine modification is found at Ser526. The segment at 547-577 (QRNIPIHSCPKCGEVLPDIDTLQIHVMDCII) adopts a CCHC NOA-type zinc-finger fold. Zn(2+)-binding residues include Cys555, Cys558, His571, and Cys575.

As to quaternary structure, self-associates. Interacts with HD. Interacts with GTF3A. Interacts with MYO6. Interacts (via UBAN) with ubiquitinated TFRC. Interacts with GTP-bound Rab8 (RAB8A and/or RAB8B). Interacts with TBC1D17. Interacts with TBK1. Interacts with TRAF3. Binds to linear ubiquitin chains. Interacts with LC3 family members MAP1LC3A, MAP1LC3B, GABARAP, GABARAPL1 and GABARAPL2; OPTN phosphorylation increases the association (at least with MAP1LC3B). Interacts with RAB12; the interaction may be indirect. Interacts with TBK1; this interaction leads to the Golgi localization of TBK1 and its subsequent activation. Interacts with palmitoyltransferase ZDHHC17/HIP14; the interaction does not lead to palmitoylation of OPTN. Interacts with CYLD. Interacts with TOM1; the interaction is indirect and is mediated by MYO6, which acts as a bridge between TOM1 and OPTN. Interacts with USP12; the interaction is independent of USP12 deubiquitinase activity and may be involved in regulation of autophagic flux. (Microbial infection) Interacts with E3 14.7 kDa protein of group C human adenovirus. Interacts with Bluetongue virus protein NS3. Phosphorylated by TBK1, leading to restrict bacterial proliferation in case of infection. Phosphorylation is induced by phorbol esters and decreases its half-time. Present in aqueous humor of the eye (at protein level). Expressed in the trabecular meshwork (at protein level). Expressed in nonpigmented ciliary epithelium (at protein level). Expressed at high levels in skeletal muscle, also detected in heart, brain, pancreas, kidney, placenta and liver. Expressed in dermal fibroblasts (at protein level).

Its subcellular location is the cytoplasm. The protein resides in the perinuclear region. It is found in the golgi apparatus. The protein localises to the trans-Golgi network. It localises to the cytoplasmic vesicle. Its subcellular location is the autophagosome. The protein resides in the recycling endosome. In terms of biological role, plays an important role in the maintenance of the Golgi complex, in membrane trafficking, in exocytosis, through its interaction with myosin VI and Rab8. Links myosin VI to the Golgi complex and plays an important role in Golgi ribbon formation. Plays a role in the activation of innate immune response during viral infection. Mechanistically, recruits TBK1 at the Golgi apparatus, promoting its trans-phosphorylation after RLR or TLR3 stimulation. In turn, activated TBK1 phosphorylates its downstream partner IRF3 to produce IFN-beta/IFNB1. Plays a neuroprotective role in the eye and optic nerve. May act by regulating membrane trafficking and cellular morphogenesis via a complex that contains Rab8 and huntingtin (HD). Mediates the interaction of Rab8 with the probable GTPase-activating protein TBC1D17 during Rab8-mediated endocytic trafficking, such as that of transferrin receptor (TFRC/TfR); regulates Rab8 recruitment to tubules emanating from the endocytic recycling compartment. Autophagy receptor that interacts directly with both the cargo to become degraded and an autophagy modifier of the MAP1 LC3 family; targets ubiquitin-coated bacteria (xenophagy), such as cytoplasmic Salmonella enterica, and appears to function in the same pathway as SQSTM1 and CALCOCO2/NDP52. (Microbial infection) May constitute a cellular target for various viruses, such as adenovirus E3 14.7 or Bluetongue virus, to inhibit innate immune response. During RNA virus infection, such as that of Sendai virus, negatively regulates the induction of IFNB1. This chain is Optineurin (OPTN), found in Homo sapiens (Human).